A 514-amino-acid polypeptide reads, in one-letter code: Na(+)/H(+) antiporter NhaB (514 aa).

12 consecutive transmembrane segments (helical) span residues 23 to 43, 63 to 83, 97 to 117, 120 to 140, 144 to 164, 202 to 222, 238 to 258, 303 to 323, 357 to 377, 391 to 411, 447 to 467, and 475 to 495; these read LALLVFLIINPFIFLANPFIA, PLLPGGLLAIEAVIIGMTSAA, LLLMFMVAGIYFMKQLLLFIF, LLLSIRSKMVLSLAFCVAAAF, FLDALTVVAVVISVAVGFYGI, LMMHAGVGTALGGVMTMVGEP, FFLRMSPVTVPVLVCGLLTCM, AIIGVWLVTALALHLAEVGLI, LTVFFSIVAVIIDQHLFAPII, LFYLFNGLLSSISDNVFVGTI, ATPNGQAAFLFLLTSALAPLI, and VWMALPYTIVLTLIGLLCVEF.

It belongs to the NhaB Na(+)/H(+) (TC 2.A.34) antiporter family.

Its subcellular location is the cell inner membrane. It catalyses the reaction 2 Na(+)(in) + 3 H(+)(out) = 2 Na(+)(out) + 3 H(+)(in). In terms of biological role, na(+)/H(+) antiporter that extrudes sodium in exchange for external protons. This chain is Na(+)/H(+) antiporter NhaB, found in Salmonella paratyphi B (strain ATCC BAA-1250 / SPB7).